Here is a 306-residue protein sequence, read N- to C-terminus: Elongation factor Ts (306 aa).

Residues 81 to 84 form an involved in Mg(2+) ion dislocation from EF-Tu region; sequence TDFV.

This sequence belongs to the EF-Ts family.

The protein resides in the cytoplasm. In terms of biological role, associates with the EF-Tu.GDP complex and induces the exchange of GDP to GTP. It remains bound to the aminoacyl-tRNA.EF-Tu.GTP complex up to the GTP hydrolysis stage on the ribosome. The polypeptide is Elongation factor Ts (Polaromonas naphthalenivorans (strain CJ2)).